The following is a 101-amino-acid chain: Chaperone modulatory protein CbpM (101 aa).

It belongs to the CbpM family.

Its function is as follows. Interacts with CbpA and inhibits both the DnaJ-like co-chaperone activity and the DNA binding activity of CbpA. Together with CbpA, modulates the activity of the DnaK chaperone system. Does not inhibit the co-chaperone activity of DnaJ. The polypeptide is Chaperone modulatory protein CbpM (Pseudomonas entomophila (strain L48)).